We begin with the raw amino-acid sequence, 66 residues long: Large ribosomal subunit protein bL33c (66 aa).

Belongs to the bacterial ribosomal protein bL33 family.

Its subcellular location is the plastid. The protein resides in the chloroplast. The chain is Large ribosomal subunit protein bL33c from Carica papaya (Papaya).